Reading from the N-terminus, the 494-residue chain is MKAMMVVGTTSHAGKSFITTAICRILARRGWHITPFKGQNMALNAYVTTTGGEIGYAQAVQAWAAGINPRVEMNPILLKPQGNMTSQVILGGKAAGITTATNYYEQYFDKGWNMIVHSLERLAVEYDFVVCEGAGSPAEINLKHRDLTNMRVAKYLNAPTLLVVDIDRGGAFAHVVGTLQLLDESERALIKGIVINKFRGQRSLLDSGIEWLENYTGIPVLGVIPWREISFSAEDSLDLLERRRKEQKEINVTILRLPHIANFTDFEPLDAEKTVSISYLDLNEPLGYPDAVIIPGSKTTINDLIALHESGIAKQLQDYVAAGGIVLGICGGFQMLGEMVFDPDQLEGNNVSYAGLNLLPIETVITPEKIVRQRHTCSVYPYPGFPITGYEIHQGVTRSSKSPHQRIKTTNHPLFEDGSLGIVNDNQSVWGCYLHGIFDNGAWRRNWLNYLRNRRGLPSLPTGIANYREQRETVLNQLADLVEQYIDLTPLLNN.

A GATase cobBQ-type domain is found at 249–443 (EINVTILRLP…LHGIFDNGAW (195 aa)). The active-site Nucleophile is C330. Residue H435 is part of the active site.

Belongs to the CobB/CobQ family. CobQ subfamily.

It participates in cofactor biosynthesis; adenosylcobalamin biosynthesis. Its function is as follows. Catalyzes amidations at positions B, D, E, and G on adenosylcobyrinic A,C-diamide. NH(2) groups are provided by glutamine, and one molecule of ATP is hydrogenolyzed for each amidation. The chain is Cobyric acid synthase from Crocosphaera subtropica (strain ATCC 51142 / BH68) (Cyanothece sp. (strain ATCC 51142)).